The following is a 362-amino-acid chain: Phosphoserine aminotransferase (362 aa).

Positions 9 and 42 each coordinate L-glutamate. Residues 76-77 (GR), W102, T153, D174, and Q197 contribute to the pyridoxal 5'-phosphate site. K198 bears the N6-(pyridoxal phosphate)lysine mark. 239–240 (NT) serves as a coordination point for pyridoxal 5'-phosphate.

The protein belongs to the class-V pyridoxal-phosphate-dependent aminotransferase family. SerC subfamily. Homodimer. The cofactor is pyridoxal 5'-phosphate.

The protein localises to the cytoplasm. It carries out the reaction O-phospho-L-serine + 2-oxoglutarate = 3-phosphooxypyruvate + L-glutamate. The catalysed reaction is 4-(phosphooxy)-L-threonine + 2-oxoglutarate = (R)-3-hydroxy-2-oxo-4-phosphooxybutanoate + L-glutamate. It participates in amino-acid biosynthesis; L-serine biosynthesis; L-serine from 3-phospho-D-glycerate: step 2/3. The protein operates within cofactor biosynthesis; pyridoxine 5'-phosphate biosynthesis; pyridoxine 5'-phosphate from D-erythrose 4-phosphate: step 3/5. Catalyzes the reversible conversion of 3-phosphohydroxypyruvate to phosphoserine and of 3-hydroxy-2-oxo-4-phosphonooxybutanoate to phosphohydroxythreonine. The protein is Phosphoserine aminotransferase of Salmonella choleraesuis (strain SC-B67).